Here is a 175-residue protein sequence, read N- to C-terminus: MSILPIVTAPDERLKQKSHRVLEVTDQTRKFMDDMLKTMYHEDAAGLAAVQVGILKRILVIDIKDHDPVERPKDFYPLFIVNPDIIDKSEELVTANEGCISVPRQRVEVARPESIKIKYLDYHNKQQELEANDWLARVIQHEYDHLEGKLMIDYLSSLKRDVVLRKLKKLKNNIV.

Fe cation contacts are provided by Cys-99 and His-141. Glu-142 is an active-site residue. His-145 lines the Fe cation pocket.

This sequence belongs to the polypeptide deformylase family. Fe(2+) is required as a cofactor.

The enzyme catalyses N-terminal N-formyl-L-methionyl-[peptide] + H2O = N-terminal L-methionyl-[peptide] + formate. In terms of biological role, removes the formyl group from the N-terminal Met of newly synthesized proteins. Requires at least a dipeptide for an efficient rate of reaction. N-terminal L-methionine is a prerequisite for activity but the enzyme has broad specificity at other positions. The protein is Peptide deformylase of Rickettsia canadensis (strain McKiel).